We begin with the raw amino-acid sequence, 447 residues long: MNAWEVNFDGLVGLTHHYAGLSFGNEASTRHRFQVSNPRLAAKQGLLKMKTLADAGFPQAVIPPHERPFIPVLRQLGFSGSDEQVLEKVARQAPHWLSSVSSASPMWVANAATIAPSADTLDGKVHLTVANLNNKFHRSLEAPVTESLLKAIFNDEEKFSVHSALPQVALLGDEGAANHNRLGGHYGEPGMQLFVYGREEGNDTRPSRYPARQTREASEAVARLNQVNPQQVIFAQQNPDVIDQGVFHNDVIAVSNRQVLFCHQQAFARQVQLLANLRARVNGFMAIEVPATQVSVSDAVSTYLFNSQLLSRDDGSMMLVLPQECREHAGVWGYLNELLAADNPISELKVFDLRESMANGGGPACLRLRVVLTEEERQAVNPAVMMNDTLFNVLNDWVDRYYRDRLTAADLADPQLLREGREALDVLSQLLNLGSVYPFQREGGGNG.

Substrate-binding positions include 19–28 (AGLSFGNEAS), Asn-110, and 137–138 (HR). Glu-174 is a catalytic residue. A substrate-binding site is contributed by Arg-212. Residue His-248 is part of the active site. Substrate is bound by residues Asp-250 and Asn-359. Cys-365 serves as the catalytic Nucleophile.

It belongs to the succinylarginine dihydrolase family. As to quaternary structure, homodimer.

It carries out the reaction N(2)-succinyl-L-arginine + 2 H2O + 2 H(+) = N(2)-succinyl-L-ornithine + 2 NH4(+) + CO2. It participates in amino-acid degradation; L-arginine degradation via AST pathway; L-glutamate and succinate from L-arginine: step 2/5. In terms of biological role, catalyzes the hydrolysis of N(2)-succinylarginine into N(2)-succinylornithine, ammonia and CO(2). The polypeptide is N-succinylarginine dihydrolase (Escherichia coli O17:K52:H18 (strain UMN026 / ExPEC)).